A 398-amino-acid polypeptide reads, in one-letter code: Succinate--CoA ligase [ADP-forming] subunit beta (398 aa).

Residues 9 to 254 (KRLLHTYGAP…LSEEDEKEIE (246 aa)) enclose the ATP-grasp domain. ATP-binding positions include K46, 53–55 (GRG), E109, A112, and E117. Mg(2+)-binding residues include N209 and D223. Substrate contacts are provided by residues N274 and 331 to 333 (GIM).

Belongs to the succinate/malate CoA ligase beta subunit family. As to quaternary structure, heterotetramer of two alpha and two beta subunits. It depends on Mg(2+) as a cofactor.

The catalysed reaction is succinate + ATP + CoA = succinyl-CoA + ADP + phosphate. The enzyme catalyses GTP + succinate + CoA = succinyl-CoA + GDP + phosphate. It functions in the pathway carbohydrate metabolism; tricarboxylic acid cycle; succinate from succinyl-CoA (ligase route): step 1/1. In terms of biological role, succinyl-CoA synthetase functions in the citric acid cycle (TCA), coupling the hydrolysis of succinyl-CoA to the synthesis of either ATP or GTP and thus represents the only step of substrate-level phosphorylation in the TCA. The beta subunit provides nucleotide specificity of the enzyme and binds the substrate succinate, while the binding sites for coenzyme A and phosphate are found in the alpha subunit. The chain is Succinate--CoA ligase [ADP-forming] subunit beta from Brucella anthropi (strain ATCC 49188 / DSM 6882 / CCUG 24695 / JCM 21032 / LMG 3331 / NBRC 15819 / NCTC 12168 / Alc 37) (Ochrobactrum anthropi).